The following is a 1077-amino-acid chain: ATP-dependent helicase/deoxyribonuclease subunit B (1077 aa).

It belongs to the helicase family. AddB/RexB type 2 subfamily. In terms of assembly, heterodimer of AddA and RexB. Requires Mg(2+) as cofactor.

The heterodimer acts as both an ATP-dependent DNA helicase and an ATP-dependent, dual-direction single-stranded exonuclease. Recognizes the chi site generating a DNA molecule suitable for the initiation of homologous recombination. This subunit has 5' -&gt; 3' nuclease activity but not helicase activity. In Streptococcus agalactiae serotype III (strain NEM316), this protein is ATP-dependent helicase/deoxyribonuclease subunit B.